The primary structure comprises 162 residues: Mitochondrial fission process protein 1 (162 aa).

3 consecutive transmembrane segments (helical) span residues 36–56 (SLVK…YVAA), 81–101 (AIIA…IPGF), and 128–148 (TVTA…DAFV).

The protein belongs to the MTFP1 family.

Its subcellular location is the mitochondrion inner membrane. Its function is as follows. Involved in the mitochondrial division probably by regulating membrane fission. Loss-of-function leads to apoptosis. This chain is Mitochondrial fission process protein 1, found in Caenorhabditis briggsae.